The primary structure comprises 118 residues: Putative pterin-4-alpha-carbinolamine dehydratase (118 aa).

The protein belongs to the pterin-4-alpha-carbinolamine dehydratase family.

The catalysed reaction is (4aS,6R)-4a-hydroxy-L-erythro-5,6,7,8-tetrahydrobiopterin = (6R)-L-erythro-6,7-dihydrobiopterin + H2O. The protein is Putative pterin-4-alpha-carbinolamine dehydratase of Pseudomonas putida (strain GB-1).